We begin with the raw amino-acid sequence, 487 residues long: Sodium-coupled neutral amino acid symporter 1 (487 aa).

At methionine 1 to glycine 74 the chain is on the cytoplasmic side. Phosphoserine is present on serine 6. Phosphothreonine is present on threonine 11. Phosphoserine occurs at positions 25, 28, 49, and 52. Threonine 54 is modified (phosphothreonine). Serine 56 carries the post-translational modification Phosphoserine. Residues methionine 75–alanine 97 form a helical membrane-spanning segment. Over asparagine 98–threonine 112 the chain is Extracellular. The chain crosses the membrane as a helical span at residues leucine 113–valine 133. The Cytoplasmic segment spans residues tyrosine 134–lysine 147. A helical membrane pass occupies residues phenylalanine 148–isoleucine 168. At valine 169–serine 188 the chain is on the extracellular side. A helical transmembrane segment spans residues alanine 189–leucine 211. The Cytoplasmic portion of the chain corresponds to leucine 212–glycine 216. A helical membrane pass occupies residues tyrosine 217–isoleucine 237. Over tyrosine 238–threonine 275 the chain is Extracellular. A disulfide bond links cysteine 245 and cysteine 264. Asparagine 251 and asparagine 257 each carry an N-linked (GlcNAc...) asparagine glycan. A helical transmembrane segment spans residues valine 276–tyrosine 296. Residues serine 297 to asparagine 312 are Cytoplasmic-facing. The helical transmembrane segment at isoleucine 313–phenylalanine 333 threads the bilayer. Residues tyrosine 334 to aspartate 350 lie on the Extracellular side of the membrane. A helical membrane pass occupies residues isoleucine 351 to leucine 371. Over phenylalanine 372–histidine 393 the chain is Cytoplasmic. The chain crosses the membrane as a helical span at residues threonine 394 to methionine 414. At lysine 415 to aspartate 416 the chain is on the extracellular side. The helical transmembrane segment at isoleucine 417 to leucine 437 threads the bilayer. Residues tyrosine 438–arginine 452 lie on the Cytoplasmic side of the membrane. A helical membrane pass occupies residues isoleucine 453–valine 473. The Extracellular segment spans residues isoleucine 474–histidine 487.

This sequence belongs to the amino acid/polyamine transporter 2 family. N-glycosylation plays an important role in the L-glutamine transport. Expressed in the cerebral cortex by pyramidal and GABAergic neurons, astrocytes and other non-neuronal cells (at protein level). Expressed in placenta, heart, lung, skeletal muscle, spleen, stomach and testis. Highly expressed in cytotrophoblast cells from term placenta.

The protein localises to the cell membrane. It carries out the reaction L-glutamine(in) + Na(+)(in) = L-glutamine(out) + Na(+)(out). It catalyses the reaction L-alanine(in) + Na(+)(in) = L-alanine(out) + Na(+)(out). The catalysed reaction is L-asparagine(in) + Na(+)(in) = L-asparagine(out) + Na(+)(out). The enzyme catalyses L-histidine(in) + Na(+)(in) = L-histidine(out) + Na(+)(out). It carries out the reaction L-serine(in) + Na(+)(in) = L-serine(out) + Na(+)(out). It catalyses the reaction L-cysteine(in) + Na(+)(in) = L-cysteine(out) + Na(+)(out). The catalysed reaction is L-methionine(in) + Na(+)(in) = L-methionine(out) + Na(+)(out). The enzyme catalyses glycine(in) + Na(+)(in) = glycine(out) + Na(+)(out). It carries out the reaction L-threonine(in) + Na(+)(in) = L-threonine(out) + Na(+)(out). It catalyses the reaction L-proline(in) + Na(+)(in) = L-proline(out) + Na(+)(out). Its activity is regulated as follows. Inhibited by alpha-(methylamino)isobutyric acid (MeAIB). Inhibited by lithium, potassium, choline ions, N-methylglucamine. The pH dependence has an allosteric effect on the transport. Its function is as follows. Symporter that cotransports short-chain neutral amino acids and sodium ions from the extraccellular to the intracellular side of the cell membrane. The transport is elctrogenic, pH dependent and driven by the Na(+) electrochemical gradient. Participates in the astroglia-derived glutamine transport into GABAergic interneurons for neurotransmitter GABA de novo synthesis. May also contributes to amino acid transport in placental trophoblasts. Also regulates synaptic plasticity. The chain is Sodium-coupled neutral amino acid symporter 1 (SLC38A1) from Homo sapiens (Human).